A 276-amino-acid polypeptide reads, in one-letter code: 2-dehydro-3-deoxyphosphooctonate aldolase (276 aa).

It belongs to the KdsA family.

The protein resides in the cytoplasm. It catalyses the reaction D-arabinose 5-phosphate + phosphoenolpyruvate + H2O = 3-deoxy-alpha-D-manno-2-octulosonate-8-phosphate + phosphate. It participates in carbohydrate biosynthesis; 3-deoxy-D-manno-octulosonate biosynthesis; 3-deoxy-D-manno-octulosonate from D-ribulose 5-phosphate: step 2/3. The protein operates within bacterial outer membrane biogenesis; lipopolysaccharide biosynthesis. This Helicobacter pylori (strain P12) protein is 2-dehydro-3-deoxyphosphooctonate aldolase.